The primary structure comprises 396 residues: NASP-related protein sim3 (396 aa).

The disordered stretch occupies residues Met1–Ala31. TPR repeat units lie at residues Ile32 to Ile65 and Ile89 to Thr122. The segment at Asn135–Glu164 is disordered. Residues His143–Asn154 show a composition bias toward basic and acidic residues. One copy of the TPR 3 repeat lies at Ala199 to Val232. The stretch at Cys267–Ala329 forms a coiled coil. Positions Arg284–Glu301 are enriched in basic and acidic residues. 2 disordered regions span residues Arg284–Asp307 and Glu334–Asp396. Residues Ser343–Leu353 are compositionally biased toward low complexity.

Belongs to the NASP family. In terms of assembly, interacts with cnp1, hht1, hht2 and hht3; has a preference for CENP-A (cnp1) over histone H3 (hht1/2/3).

The protein resides in the nucleus. Functionally, histone H3 and H3-like CENP-A-specific chaperone. Promotes delivery and incorporation of CENP-A in centromeric chromatin, probably by escorting nascent CENP-A to CENP-A chromatin assembly factors. Required for central core silencing and normal chromosome segregation. The protein is NASP-related protein sim3 (sim3) of Schizosaccharomyces pombe (strain 972 / ATCC 24843) (Fission yeast).